A 461-amino-acid polypeptide reads, in one-letter code: Cysteine--tRNA ligase (461 aa).

Residue Cys28 participates in Zn(2+) binding. A 'HIGH' region motif is present at residues 30-40; the sequence is ITVYDLCHIGH. Zn(2+)-binding residues include Cys209, His234, and Glu238. Positions 266 to 270 match the 'KMSKS' region motif; it reads KMSKS. Lys269 contributes to the ATP binding site.

Belongs to the class-I aminoacyl-tRNA synthetase family. As to quaternary structure, monomer. It depends on Zn(2+) as a cofactor.

The protein resides in the cytoplasm. The enzyme catalyses tRNA(Cys) + L-cysteine + ATP = L-cysteinyl-tRNA(Cys) + AMP + diphosphate. The polypeptide is Cysteine--tRNA ligase (Escherichia coli O17:K52:H18 (strain UMN026 / ExPEC)).